Consider the following 764-residue polypeptide: MAANPEVFSGRLEGNVAAARRPGSAQEEEGEAAGGALSCVDQGRTIKAEQAGHPTVAMEITSTDFTSTLHLHDAESKELPGDENGLSYTYLSSDKHSHTDSTYFTGISKKGTESPDIKEFSGVGPRSPKEIPTFDSRGLLSSDSGIEMTPAECSEVNKSLADPTEEEKQEAYKYIDISRSPDMKPQQVLDKDFGENKASTIGQAAPTEQQAYDSVTMSWQKDHYNGNISEYLPYVPYMEEPRKDFGLYNSPTSKEPKSAPVTISFTGMETTLQTEYPENQQGKSDKGLKLSPDMVPTVTVSEPEDNSPESITPPSTDADGYTEPSGLEEQRKYKISEDELISAIKAKEGTKGFSSETNEEKQSYSFNVEKQDFTVLPTRDAPAPLDMEGSSTESGDSEIELVSEDQVGAEEAMQSAYMTFSHIGGPPPSPASPSIQYSILREEREAELDSELIIESCDGSSASEESPKRDQDSPMMKPMIMDIIEEENLSRAESFDASDFESCSLKERKLNMENLAESACYLKGTYHTEIRADMPSTKKEELLPQKKSPEGSAYQSKVLGKTSTLPLKPLPFLSKRKAIELLYWRDIKQTGIVFGSVLLMLFSLTQFSVVSVIAYLALAALSATISFRIYKSVLQAVQKTDEGHPFKSYLDMEISLSQEQIQKYTDCLQAYTNSIVKELRRLFLVQDLVDSLKFAVLMWLLTYVGALFNGLTLLIMAVVSMFSLPVVYDKYQAQIDQYLGLVRTNMNTIVTKIQAKIPGTKQKE.

Disordered stretches follow at residues 1 to 37 (MAAN…GGAL), 115 to 147 (PDIK…SGIE), 247 to 400 (LYNS…SEIE), and 455 to 475 (ESCD…DSPM). The span at 261–282 (VTISFTGMETTLQTEYPENQQG) shows a compositional bias: polar residues. The span at 328–337 (EEQRKYKISE) shows a compositional bias: basic and acidic residues. One can recognise a Reticulon domain in the interval 578-764 (AIELLYWRDI…AKIPGTKQKE (187 aa)). The next 2 membrane-spanning stretches (helical) occupy residues 607–627 (FSVV…TISF) and 696–716 (VLMW…LLIM).

It is found in the endoplasmic reticulum membrane. The protein localises to the nucleus. Its function is as follows. Inhibits amyloid precursor protein processing, probably by blocking BACE1 activity. This chain is Reticulon-1, found in Xenopus tropicalis (Western clawed frog).